We begin with the raw amino-acid sequence, 329 residues long: MPRRPLLEFEKPLVELEQQIEQIRQLARDSEVDVTQQLQQLESLASRRRQEIFQGLTPAQKIQVARHPHRPSTLDFIQMFCDDFVELHGDRRGNDDQALIGGVGRLGDRAVLLLGHQKGRDTKENVARNFGMATPGGYRKAMRLMEHADRFRLPILTFIDTPGAYAGLQAEEQGQGEAIAVNLRDMFGLRVPVIATVIGEGGSGGALGIGVADRLLMFEHSVYTVASPEACASILWRDAAKAPDAAAALKITGRDLLELGVVDEVLAEPSGGNNWAPLEAGQTLRAALERHLGELLTLSEQELRDARYTKFRAMGRFAEEMSQEFDDIA.

Residues 40-294 enclose the CoA carboxyltransferase C-terminal domain; the sequence is QLESLASRRR…RAALERHLGE (255 aa).

This sequence belongs to the AccA family. Acetyl-CoA carboxylase is a heterohexamer composed of biotin carboxyl carrier protein (AccB), biotin carboxylase (AccC) and two subunits each of ACCase subunit alpha (AccA) and ACCase subunit beta (AccD).

It is found in the cytoplasm. It carries out the reaction N(6)-carboxybiotinyl-L-lysyl-[protein] + acetyl-CoA = N(6)-biotinyl-L-lysyl-[protein] + malonyl-CoA. The protein operates within lipid metabolism; malonyl-CoA biosynthesis; malonyl-CoA from acetyl-CoA: step 1/1. Functionally, component of the acetyl coenzyme A carboxylase (ACC) complex. First, biotin carboxylase catalyzes the carboxylation of biotin on its carrier protein (BCCP) and then the CO(2) group is transferred by the carboxyltransferase to acetyl-CoA to form malonyl-CoA. This Synechococcus sp. (strain CC9902) protein is Acetyl-coenzyme A carboxylase carboxyl transferase subunit alpha.